The sequence spans 455 residues: Tubulin delta chain (455 aa).

Residue 143–149 (AGGTGSG) participates in GTP binding.

This sequence belongs to the tubulin family. As to quaternary structure, found in a complex with TEDC1, TEDC2, TUBE1 and TUBD1. In terms of tissue distribution, highly expressed in testis.

The protein resides in the cell projection. Its subcellular location is the cilium. It is found in the cytoplasm. It localises to the cytoskeleton. The protein localises to the microtubule organizing center. The protein resides in the centrosome. Its subcellular location is the centriole. It is found in the nucleus. Functionally, acts as a positive regulator of hedgehog signaling and regulates ciliary function. This chain is Tubulin delta chain (Tubd1), found in Mus musculus (Mouse).